Here is a 221-residue protein sequence, read N- to C-terminus: Small ribosomal subunit protein eS1 (221 aa).

It belongs to the eukaryotic ribosomal protein eS1 family.

In Pyrobaculum aerophilum (strain ATCC 51768 / DSM 7523 / JCM 9630 / CIP 104966 / NBRC 100827 / IM2), this protein is Small ribosomal subunit protein eS1.